The primary structure comprises 178 residues: Ribosome maturation factor RimP (178 aa).

This sequence belongs to the RimP family.

The protein localises to the cytoplasm. In terms of biological role, required for maturation of 30S ribosomal subunits. The chain is Ribosome maturation factor RimP from Mycobacterium avium (strain 104).